The following is a 510-amino-acid chain: Maturase K (510 aa).

It belongs to the intron maturase 2 family. MatK subfamily.

The protein resides in the plastid. Usually encoded in the trnK tRNA gene intron. Probably assists in splicing its own and other chloroplast group II introns. The chain is Maturase K from Bartsia alpina (Velvet bells).